Here is a 142-residue protein sequence, read N- to C-terminus: Transcription antitermination protein NusB (142 aa).

This sequence belongs to the NusB family.

In terms of biological role, involved in transcription antitermination. Required for transcription of ribosomal RNA (rRNA) genes. Binds specifically to the boxA antiterminator sequence of the ribosomal RNA (rrn) operons. In Actinobacillus succinogenes (strain ATCC 55618 / DSM 22257 / CCUG 43843 / 130Z), this protein is Transcription antitermination protein NusB.